Reading from the N-terminus, the 688-residue chain is Elongation factor G (688 aa).

The region spanning 8 to 282 is the tr-type G domain; that stretch reads DKFRNFGIMA…GVVDYLPSPL (275 aa). GTP is bound by residues 17–24, 81–85, and 135–138; these read AHIDAGKT, DTPGH, and NKMD.

The protein belongs to the TRAFAC class translation factor GTPase superfamily. Classic translation factor GTPase family. EF-G/EF-2 subfamily.

The protein localises to the cytoplasm. Functionally, catalyzes the GTP-dependent ribosomal translocation step during translation elongation. During this step, the ribosome changes from the pre-translocational (PRE) to the post-translocational (POST) state as the newly formed A-site-bound peptidyl-tRNA and P-site-bound deacylated tRNA move to the P and E sites, respectively. Catalyzes the coordinated movement of the two tRNA molecules, the mRNA and conformational changes in the ribosome. This is Elongation factor G from Clostridium botulinum (strain Eklund 17B / Type B).